A 282-amino-acid polypeptide reads, in one-letter code: Casein kinase II subunit beta-2 (282 aa).

The disordered stretch occupies residues 1-92 (MYRERGMVGS…ESEVSGSDGE (92 aa)). Basic and acidic residues predominate over residues 13–28 (EVVDRKRINEIHDNRP). 2 stretches are compositionally biased toward polar residues: residues 29–47 (SHSMSQPVNGKGKVTSTSV) and 61–71 (RSGSISKTNIS). A compositionally biased stretch (acidic residues) spans 75–92 (DISDTDSEESEVSGSDGE).

This sequence belongs to the casein kinase 2 subunit beta family. As to quaternary structure, heterotetramer of two catalytic alpha subunits and two regulatory beta subunits. Interacts with CCA1. Phosphorylated by alpha subunit.

Its subcellular location is the cytoplasm. It localises to the cytosol. The protein resides in the nucleus. In terms of biological role, plays a complex role in regulating the basal catalytic activity of the alpha subunit. The tetrameric holoenzyme CK2, composed of two alpha and two beta subunits, phosphorylates the transcription factor PIF1 after an exposure to light, resulting in a proteasome-dependent degradation of PIF1 and promotion of photomorphogenesis. CK2 phosphorylates translation initiation factors. May participate in the regulation of the initiation of translation. The protein is Casein kinase II subunit beta-2 (CKB2) of Arabidopsis thaliana (Mouse-ear cress).